The chain runs to 432 residues: Solute carrier family 38 member 8 (432 aa).

11 consecutive transmembrane segments (helical) span residues 29–49 (AVFI…PWAF), 59–79 (FLVA…LGYA), 103–123 (LCEI…LRVI), 144–164 (AAQN…LSAL), 175–195 (ILGT…YYLW), 215–237 (VFSV…SIYC), 253–273 (LSLL…FLTF), 292–312 (IIVA…IVLF), 345–365 (LPLT…LPDL), 368–388 (IISI…GLCL), and 409–429 (GILS…VAMV).

Belongs to the amino acid/polyamine transporter 2 family. Expressed in neurons located in the gray matter. Highly expressed in thalamus, hypothalamus, amygdala and pons. Expressed in the CA3 area of hippocampus and in the Purkinje layer of the cerebellum (at protein level). Expressed in the eye.

The protein localises to the membrane. The protein resides in the cytoplasm. It is found in the cell cortex. Its subcellular location is the cell projection. It localises to the axon. It catalyses the reaction L-glutamine(out) = L-glutamine(in). The catalysed reaction is L-alanine(in) = L-alanine(out). The enzyme catalyses L-histidine(out) = L-histidine(in). It carries out the reaction L-aspartate(out) = L-aspartate(in). It catalyses the reaction L-arginine(in) = L-arginine(out). The catalysed reaction is L-leucine(in) = L-leucine(out). Functionally, electrogenic sodium-dependent amino acid transporter with a preference for L-glutamine, L-alanine, L-histidine, L-aspartate and L-arginine. May facilitate glutamine uptake in both excitatory and inhibitory neurons. The transport mechanism and stoichiometry remain to be elucidated. The sequence is that of Solute carrier family 38 member 8 from Mus musculus (Mouse).